Consider the following 211-residue polypeptide: Secreted phosphoprotein 24 (211 aa).

Positions 1-29 are cleaved as a signal peptide; it reads MISRMEKMTMMMKILIMFALGMNYWSCSG. 2 cysteine pairs are disulfide-bonded: Cys-92-Cys-103 and Cys-116-Cys-134. Position 96 is a phosphoserine (Ser-96). Phosphoserine occurs at positions 145, 146, 170, 173, and 182.

Belongs to the SPP2 family. In terms of processing, phosphorylation sites are present in the extracellular medium. As to expression, detected in liver and plasma.

The protein localises to the secreted. In terms of biological role, could coordinate an aspect of bone turnover. In Homo sapiens (Human), this protein is Secreted phosphoprotein 24 (SPP2).